The following is a 341-amino-acid chain: Phosphoribosylformylglycinamidine cyclo-ligase (341 aa).

The protein belongs to the AIR synthase family.

It is found in the cytoplasm. The catalysed reaction is 2-formamido-N(1)-(5-O-phospho-beta-D-ribosyl)acetamidine + ATP = 5-amino-1-(5-phospho-beta-D-ribosyl)imidazole + ADP + phosphate + H(+). The protein operates within purine metabolism; IMP biosynthesis via de novo pathway; 5-amino-1-(5-phospho-D-ribosyl)imidazole from N(2)-formyl-N(1)-(5-phospho-D-ribosyl)glycinamide: step 2/2. The protein is Phosphoribosylformylglycinamidine cyclo-ligase of Finegoldia magna (strain ATCC 29328 / DSM 20472 / WAL 2508) (Peptostreptococcus magnus).